Reading from the N-terminus, the 179-residue chain is Large ribosomal subunit protein uL10 (179 aa).

The protein belongs to the universal ribosomal protein uL10 family. As to quaternary structure, part of the ribosomal stalk of the 50S ribosomal subunit. The N-terminus interacts with L11 and the large rRNA to form the base of the stalk. The C-terminus forms an elongated spine to which L12 dimers bind in a sequential fashion forming a multimeric L10(L12)X complex.

Forms part of the ribosomal stalk, playing a central role in the interaction of the ribosome with GTP-bound translation factors. This Thermotoga petrophila (strain ATCC BAA-488 / DSM 13995 / JCM 10881 / RKU-1) protein is Large ribosomal subunit protein uL10.